Reading from the N-terminus, the 62-residue chain is Large ribosomal subunit protein bL33 (62 aa).

Belongs to the bacterial ribosomal protein bL33 family.

In Bacteroides fragilis (strain ATCC 25285 / DSM 2151 / CCUG 4856 / JCM 11019 / LMG 10263 / NCTC 9343 / Onslow / VPI 2553 / EN-2), this protein is Large ribosomal subunit protein bL33.